The following is a 344-amino-acid chain: UDP-glucose 4-epimerase (344 aa).

Residues 15 to 17 (GYI), 36 to 40 (DNLSN), 63 to 64 (DI), phenylalanine 85, and lysine 89 each bind NAD(+). Residue 129–131 (SAT) coordinates substrate. Residue tyrosine 153 is the Proton acceptor of the active site. Positions 157 and 181 each coordinate NAD(+). Substrate is bound by residues 181-183 (YFN), 202-204 (NNL), 220-222 (SIF), arginine 235, and 297-300 (RKGD).

Belongs to the NAD(P)-dependent epimerase/dehydratase family. Homodimer. It depends on NAD(+) as a cofactor.

The catalysed reaction is UDP-alpha-D-glucose = UDP-alpha-D-galactose. The enzyme catalyses UDP-N-acetyl-alpha-D-glucosamine = UDP-N-acetyl-alpha-D-galactosamine. It participates in carbohydrate metabolism; galactose metabolism. Its function is as follows. Catalyzes two distinct but analogous reactions: the reversible epimerization of UDP-glucose to UDP-galactose and the reversible epimerization of UDP-N-acetylglucosamine to UDP-N-acetylgalactosamine. The reaction with UDP-Gal plays a critical role in the Leloir pathway of galactose catabolism in which galactose is converted to the glycolytic intermediate glucose 6-phosphate. It contributes to the catabolism of dietary galactose and enables the endogenous biosynthesis of both UDP-Gal and UDP-GalNAc when exogenous sources are limited. Both UDP-sugar interconversions are important in the synthesis of glycoproteins and glycolipids. The protein is UDP-glucose 4-epimerase (galE) of Dictyostelium discoideum (Social amoeba).